The chain runs to 414 residues: Gamma-glutamyl phosphate reductase (414 aa).

This sequence belongs to the gamma-glutamyl phosphate reductase family.

It localises to the cytoplasm. It carries out the reaction L-glutamate 5-semialdehyde + phosphate + NADP(+) = L-glutamyl 5-phosphate + NADPH + H(+). The protein operates within amino-acid biosynthesis; L-proline biosynthesis; L-glutamate 5-semialdehyde from L-glutamate: step 2/2. In terms of biological role, catalyzes the NADPH-dependent reduction of L-glutamate 5-phosphate into L-glutamate 5-semialdehyde and phosphate. The product spontaneously undergoes cyclization to form 1-pyrroline-5-carboxylate. This chain is Gamma-glutamyl phosphate reductase, found in Xanthomonas campestris pv. campestris (strain 8004).